The following is a 348-amino-acid chain: Mannonate dehydratase (348 aa).

This sequence belongs to the mannonate dehydratase family. Fe(2+) serves as cofactor. It depends on Mn(2+) as a cofactor.

The catalysed reaction is D-mannonate = 2-dehydro-3-deoxy-D-gluconate + H2O. The protein operates within carbohydrate metabolism; pentose and glucuronate interconversion. In terms of biological role, catalyzes the dehydration of D-mannonate. In Streptococcus agalactiae serotype III (strain NEM316), this protein is Mannonate dehydratase.